Reading from the N-terminus, the 75-residue chain is Carwaprin-b (75 aa).

Residues 1–24 (MSSGGLLLLLGLLTLWAELTPVSS) form the signal peptide. The region spanning 27–72 (RPKKPGLCPPRPQKPPCVRECKNDWRCPGEQKCCRYGCIYECRDPI) is the WAP domain. 4 disulfides stabilise this stretch: cysteine 34–cysteine 60, cysteine 43–cysteine 64, cysteine 47–cysteine 59, and cysteine 53–cysteine 68.

It belongs to the venom waprin family. Expressed by the venom gland.

Its subcellular location is the secreted. Its function is as follows. Damages membranes of susceptible bacteria. Has no hemolytic activity. Not toxic to mice. Does not inhibit the proteinases elastase and cathepsin G. This chain is Carwaprin-b, found in Tropidechis carinatus (Australian rough-scaled snake).